The chain runs to 656 residues: uncharacterized protein (656 aa).

A run of 3 helical transmembrane segments spans residues 7 to 27 (QQVLTFVSSLSTFVTIILNHL), 40 to 60 (LMAMTTLMVSLLMSSLTFWTL), and 210 to 230 (AVFISIWLMVILGAAFNAFTI). The HAMP domain occupies 231–280 (TRPIRELLTGVKNIASGDFYQRIDLPFGGELGALIFNFNEMAERLEKYEQ). Residues 289–359 (EKAKLETLVS…PILNDIIRKN (71 aa)) enclose the PAS domain. The Histidine kinase domain occupies 424–654 (NVSHELRTPL…CFFFDLMIAK (231 aa)). The residue at position 427 (H427) is a Phosphohistidine; by autocatalysis.

The protein resides in the plastid. It localises to the chloroplast membrane. The catalysed reaction is ATP + protein L-histidine = ADP + protein N-phospho-L-histidine.. This is an uncharacterized protein from Porphyra purpurea (Red seaweed).